Reading from the N-terminus, the 1144-residue chain is Guanine nucleotide-binding protein G(s) subunit alpha isoforms XLas (1144 aa).

Disordered regions lie at residues 1 to 186, 316 to 558, 622 to 657, and 735 to 772; these read MGML…LAPG, DDDT…PAAG, SASAAPSRAHLRPPSPEIQVADPPTPRPAPRPSAWP, and RSRSLSPGKAKDPMEERRKQMRKEAMEMREQKRADKKR. Residues 31-46 are compositionally biased toward low complexity; it reads LEAQGAAAPGAGVGPA. The segment covering 343–356 has biased composition (basic and acidic residues); sequence KSEHAKRPPLERQA. Residues 358–369 show a composition bias toward polar residues; sequence ETGNSPISSTTA. Residues 370–381 show a composition bias toward basic and acidic residues; that stretch reads EEAKVPSLERGE. 2 stretches are compositionally biased toward low complexity: residues 467–499 and 518–558; these read PAAAAAAEPAAEPAAEPAAEPAAEPAAEPAAEA and EPAA…PAAG. The span at 644–654 shows a compositional bias: pro residues; that stretch reads PPTPRPAPRPS. Over residues 743-767 the composition is skewed to basic and acidic residues; that stretch reads KAKDPMEERRKQMRKEAMEMREQKR. The stretch at 745–772 forms a coiled coil; that stretch reads KDPMEERRKQMRKEAMEMREQKRADKKR. The 356-residue stretch at 789-1144 folds into the G-alpha domain; it reads CTHRLLLLGA…RMHLRQYELL (356 aa). The tract at residues 792-805 is G1 motif; that stretch reads RLLLLGAGESGKST. 797 to 805 contacts GTP; the sequence is GAGESGKST. Ser804 serves as a coordination point for Mg(2+). Residues 818–840 form a disordered region; the sequence is FNGEGGEEDPQAARSNSDGEKAT. Residues 837–863 adopt a coiled-coil conformation; sequence EKATKVQDIKNNLKEAIETIVAAMSNL. The interval 946 to 954 is G2 motif; sequence DLPRCRVLT. GTP is bound by residues 947 to 954, 973 to 977, and 1042 to 1045; these read LPRCRVLT, DVGGQ, and NKQD. An ADP-ribosylarginine; by cholera toxin modification is found at Arg951. Thr954 is a Mg(2+) binding site. The G3 motif stretch occupies residues 969-978; sequence FHMFDVGGQR. The G4 motif stretch occupies residues 1038 to 1045; that stretch reads ILFLNKQD. The residue at position 1102 (Ser1102) is a Phosphoserine. Residues 1114-1119 are G5 motif; sequence TCAVDT. Ala1116 contacts GTP.

Belongs to the G-alpha family. G(s) subfamily. As to quaternary structure, g proteins are composed of 3 units; alpha, beta and gamma. The alpha chain contains the guanine nucleotide binding site. Interacts through its N-terminal region with ALEX which is produced from the same locus in a different open reading frame. This interaction may inhibit its adenylyl cyclase-stimulating activity. Interacts with MAGED2. Enriched in neuroendocrine tissues with a particularly high level of expression in pituitary where it is abundant in intermediate and anterior lobes. In adrenal gland, found in central region containing medullary chromaffin cells but not in cortex. In cerebellum, strongly expressed in perikarya of Purkinje cells. Not detected in liver, kidney or neurohypophysis.

The protein resides in the cell membrane. It localises to the apical cell membrane. Guanine nucleotide-binding proteins (G proteins) function as transducers in numerous signaling pathways controlled by G protein-coupled receptors (GPCRs). Signaling involves the activation of adenylyl cyclases, resulting in increased levels of the signaling molecule cAMP. GNAS functions downstream of several GPCRs, including beta-adrenergic receptors. XLas isoforms interact with the same set of receptors as Gnas isoforms. This Rattus norvegicus (Rat) protein is Guanine nucleotide-binding protein G(s) subunit alpha isoforms XLas.